A 127-amino-acid chain; its full sequence is Large ribosomal subunit protein bL12 (127 aa).

The interval 98 to 127 (PKPVKNGVSKEEAEEAKKQLVESGAEVEIK) is disordered. A compositionally biased stretch (basic and acidic residues) spans 105–117 (VSKEEAEEAKKQL).

It belongs to the bacterial ribosomal protein bL12 family. As to quaternary structure, homodimer. Part of the ribosomal stalk of the 50S ribosomal subunit. Forms a multimeric L10(L12)X complex, where L10 forms an elongated spine to which 2 to 4 L12 dimers bind in a sequential fashion. Binds GTP-bound translation factors.

Functionally, forms part of the ribosomal stalk which helps the ribosome interact with GTP-bound translation factors. Is thus essential for accurate translation. The protein is Large ribosomal subunit protein bL12 of Geobacter sulfurreducens (strain ATCC 51573 / DSM 12127 / PCA).